We begin with the raw amino-acid sequence, 263 residues long: MFEIGINLTSSQFDKDRLQVVERARTAGLSGMLITGTSAQESVEAQKMADEHPDFCWSTAGVHPHQASHWNAQVEAGIRELAVLPNVVAIGECGLDFNRNFSPADRQEAAFTAQLALAKELQLPVFLHCRDAGERFATLLKPWLSDLPGGVVHCFTGTRQELELYLSLGLSIGITGWVCDERRGLELRDMLPLIPADRLMLETDAPYLLPRDMENKPKNRRNEPAFLPHIVKQVALWRGEDPQWLADITDDNARKLFALSARR.

3 residues coordinate a divalent metal cation: E92, H128, and H153.

This sequence belongs to the metallo-dependent hydrolases superfamily. TatD-type hydrolase family. TatD subfamily. Monomer. It depends on Mg(2+) as a cofactor.

It is found in the cytoplasm. 3'-5' exonuclease that prefers single-stranded DNA and RNA. May play a role in the H(2)O(2)-induced DNA damage repair. In Rahnella sp. (strain Y9602), this protein is 3'-5' ssDNA/RNA exonuclease TatD.